We begin with the raw amino-acid sequence, 194 residues long: Methyl-CpG-binding domain protein 3-like 1 (194 aa).

The segment at 1–104 (MAKSSQRKQR…KLVPSYTGGS (104 aa)) is transcription repressor.

Belongs to the MBD3L family. In terms of tissue distribution, highly expressed in testis. Detected at low levels in pancreas. Not detected in the other tissues tested.

It is found in the nucleus. In terms of biological role, transcriptional repressor. The sequence is that of Methyl-CpG-binding domain protein 3-like 1 (MBD3L1) from Homo sapiens (Human).